A 229-amino-acid polypeptide reads, in one-letter code: N-(5'-phosphoribosyl)anthranilate isomerase (229 aa).

This sequence belongs to the TrpF family.

It catalyses the reaction N-(5-phospho-beta-D-ribosyl)anthranilate = 1-(2-carboxyphenylamino)-1-deoxy-D-ribulose 5-phosphate. It participates in amino-acid biosynthesis; L-tryptophan biosynthesis; L-tryptophan from chorismate: step 3/5. This is N-(5'-phosphoribosyl)anthranilate isomerase from Clostridium beijerinckii (strain ATCC 51743 / NCIMB 8052) (Clostridium acetobutylicum).